A 284-amino-acid polypeptide reads, in one-letter code: Polyamine aminopropyltransferase (284 aa).

Residues 2–237 (ELWYTEQHTE…GHWLFGFASK (236 aa)) form the PABS domain. Q31 is an S-methyl-5'-thioadenosine binding site. Spermidine-binding residues include H62 and D86. S-methyl-5'-thioadenosine contacts are provided by residues E106 and 137–138 (DG). Catalysis depends on D155, which acts as the Proton acceptor. 155-158 (DSTD) is a binding site for spermidine. P162 lines the S-methyl-5'-thioadenosine pocket.

The protein belongs to the spermidine/spermine synthase family. In terms of assembly, homodimer or homotetramer.

The protein localises to the cytoplasm. It carries out the reaction S-adenosyl 3-(methylsulfanyl)propylamine + putrescine = S-methyl-5'-thioadenosine + spermidine + H(+). It functions in the pathway amine and polyamine biosynthesis; spermidine biosynthesis; spermidine from putrescine: step 1/1. Functionally, catalyzes the irreversible transfer of a propylamine group from the amino donor S-adenosylmethioninamine (decarboxy-AdoMet) to putrescine (1,4-diaminobutane) to yield spermidine. This is Polyamine aminopropyltransferase from Alkaliphilus oremlandii (strain OhILAs) (Clostridium oremlandii (strain OhILAs)).